A 317-amino-acid chain; its full sequence is Ribosomal protein L11 methyltransferase (317 aa).

Thr-158, Gly-179, Asp-201, and Asn-244 together coordinate S-adenosyl-L-methionine.

Belongs to the methyltransferase superfamily. PrmA family.

Its subcellular location is the cytoplasm. The catalysed reaction is L-lysyl-[protein] + 3 S-adenosyl-L-methionine = N(6),N(6),N(6)-trimethyl-L-lysyl-[protein] + 3 S-adenosyl-L-homocysteine + 3 H(+). Functionally, methylates ribosomal protein L11. This is Ribosomal protein L11 methyltransferase from Streptococcus equi subsp. equi (strain 4047).